Here is a 1019-residue protein sequence, read N- to C-terminus: Type VI secretion system spike protein VgrG2b (1019 aa).

The disordered stretch occupies residues A268–G291. H935 contributes to the Zn(2+) binding site. E936 is a catalytic residue. 2 residues coordinate Zn(2+): H939 and E983.

It belongs to the VgrG protein family. In terms of assembly, interacts with Tla3; this interaction promotes Tle3 loading onto VgrG2b. Interacts with host gamma-tubulin ring complex components GCP1 and GCP4. The cofactor is Zn(2+).

It localises to the secreted. Functionally, part of the H2 type VI secretion system (H2-T6SS) specialized secretion system, which delivers several virulence factors in both prokaryotic and eukaryotic cells during infection. Forms the spike at the tip of the elongating tube probably formed by haemolysin co-regulated protein 2b/Hcp2b. Allows the delivery of the Tle3 antibacterial toxin to target cells where it exerts its toxicity. Additionally, acts directly as an effector and promotes internalization by interacting with the host gamma-tubulin ring complex. Elicits toxicity also in the bacterial periplasm and disrupts bacterial cell morphology. Toxicity is counteracted by a cognate immunity protein. The polypeptide is Type VI secretion system spike protein VgrG2b (vgrG2b) (Pseudomonas aeruginosa (strain ATCC 15692 / DSM 22644 / CIP 104116 / JCM 14847 / LMG 12228 / 1C / PRS 101 / PAO1)).